Here is a 377-residue protein sequence, read N- to C-terminus: MATQGQRVNWGDEPSKRRGRSNSRGRKNNDIPLSFYNPITLEQGSKFWNLCPRDLVPKGIGNKDQQIGYWNRQIRYRIVKGQRKELAERWFFYFLGTGPHADAKFKDKIDGVFWVARDGAMNKPTTLGTRGTNNESKPLRFDGKIPPQFQLEVNRSRNNSRSGSQSRSVSRNRSQSRGRHHSNNQNNNVEDTIVAVLEKLGVTDKQRSRSKPRERSDSKPRDTTPKNANKHTWKKTAGKGDVTTFYGARSSSANFGDSDLVANGNAAKCYPQIAECVPSVSSIIFGSQWSAEEAGDQVKVTLTHTYYLPKDDAKTSQFLEQIDAYKRPSEVAKDQRQRRSRSKSADKKPEELSVTLVEAYTDVFDDTQVEMIDEVTN.

Disordered regions lie at residues methionine 1 to asparagine 29 and methionine 121 to threonine 236. Basic residues predominate over residues arginine 17–arginine 26. Positions isoleucine 31 to valine 153 constitute a CoV N NTD domain. Residues leucine 33–asparagine 159 form an RNA-binding region. A compositionally biased stretch (polar residues) spans lysine 123–serine 136. Serine 156 bears the Phosphoserine; by host mark. Positions serine 156–arginine 173 are enriched in low complexity. Basic and acidic residues predominate over residues glycine 201–threonine 224. The CoV N CTD domain occupies proline 220–lysine 333. Residues asparagine 227–glutamate 330 are dimerization. Phosphoserine; by host occurs at positions 250 and 252. A disordered region spans residues arginine 327–glutamate 351.

This sequence belongs to the alphacoronavirus nucleocapsid protein family. Homooligomer. Both monomeric and oligomeric forms interact with RNA. Interacts with protein M. Interacts with NSP3; this interaction serves to tether the genome to the newly translated replicase-transcriptase complex at a very early stage of infection. Post-translationally, ADP-ribosylated. The ADP-ribosylation is retained in the virion during infection. Phosphorylated on serine and threonine residues.

The protein resides in the virion. It localises to the host endoplasmic reticulum-Golgi intermediate compartment. The protein localises to the host Golgi apparatus. Its function is as follows. Packages the positive strand viral genome RNA into a helical ribonucleocapsid (RNP) and plays a fundamental role during virion assembly through its interactions with the viral genome and membrane protein M. Plays an important role in enhancing the efficiency of subgenomic viral RNA transcription as well as viral replication. This chain is Nucleoprotein, found in Feline coronavirus (strain FIPV WSU-79/1146) (FCoV).